Reading from the N-terminus, the 206-residue chain is Adenine phosphoribosyltransferase (206 aa).

Belongs to the purine/pyrimidine phosphoribosyltransferase family. As to quaternary structure, homodimer.

The protein localises to the cytoplasm. It catalyses the reaction AMP + diphosphate = 5-phospho-alpha-D-ribose 1-diphosphate + adenine. It functions in the pathway purine metabolism; AMP biosynthesis via salvage pathway; AMP from adenine: step 1/1. In terms of biological role, catalyzes a salvage reaction resulting in the formation of AMP, that is energically less costly than de novo synthesis. This chain is Adenine phosphoribosyltransferase, found in Rhodopirellula baltica (strain DSM 10527 / NCIMB 13988 / SH1).